The chain runs to 719 residues: Solute carrier organic anion transporter family member 6A1 (719 aa).

Residues Met-1–Lys-46 are disordered. Residues Met-1–Arg-106 lie on the Cytoplasmic side of the membrane. The segment covering Arg-33–Lys-46 has biased composition (basic residues). A helical transmembrane segment spans residues Cys-107–Ile-126. At Asp-127–Leu-145 the chain is on the extracellular side. The helical transmembrane segment at Ala-146–Gly-166 threads the bilayer. At Asp-167–Val-171 the chain is on the cytoplasmic side. A helical membrane pass occupies residues Ile-172–Glu-196. Topologically, residues Asn-197–Ser-223 are extracellular. A helical membrane pass occupies residues Phe-224–Ile-254. The Cytoplasmic segment spans residues Asp-255–Ser-274. Residues Met-275–Thr-295 traverse the membrane as a helical segment. Over Thr-296–Leu-311 the chain is Extracellular. Asn-300 carries an N-linked (GlcNAc...) asparagine glycan. The chain crosses the membrane as a helical span at residues Trp-312 to Pro-336. The Cytoplasmic segment spans residues Asn-337–Ile-378. A helical membrane pass occupies residues Leu-379–Ile-400. Residues Gly-401 to Val-420 are Extracellular-facing. A helical membrane pass occupies residues Ala-421–Val-444. Topologically, residues Ser-445 to Glu-448 are cytoplasmic. A helical membrane pass occupies residues Met-449–Ile-472. The Extracellular portion of the chain corresponds to Ile-473–Phe-581. A Kazal-like domain is found at Gly-496 to Lys-551. N-linked (GlcNAc...) asparagine glycosylation is present at Asn-497. 3 disulfide bridges follow: Cys-502-Cys-532, Cys-508-Cys-528, and Cys-517-Cys-549. N-linked (GlcNAc...) asparagine glycosylation is present at Asn-546. Residues Ile-582–Thr-604 traverse the membrane as a helical segment. Residues Arg-605–Ser-613 lie on the Cytoplasmic side of the membrane. Residues Leu-614–Gly-639 traverse the membrane as a helical segment. The Extracellular segment spans residues Glu-640 to Cys-673. A glycan (N-linked (GlcNAc...) asparagine) is linked at Asn-661. Residues Phe-674–Tyr-691 traverse the membrane as a helical segment. Residues Lys-692–Leu-719 lie on the Cytoplasmic side of the membrane.

Belongs to the organo anion transporter (TC 2.A.60) family. As to expression, strongly expressed in testis. Weakly expressed in spleen, brain, fetal brain and placenta. Detected in lung tumors.

It is found in the cell membrane. The sequence is that of Solute carrier organic anion transporter family member 6A1 (SLCO6A1) from Homo sapiens (Human).